Here is a 216-residue protein sequence, read N- to C-terminus: Adenylate kinase (216 aa).

10 to 15 (GAGKGT) serves as a coordination point for ATP. The tract at residues 30–59 (STGDMLRAAVNAGTEVGKRAKAVMDAGKLV) is NMP. Residues Thr-31, Arg-36, 57–59 (KLV), 85–88 (GFPR), and Gln-92 contribute to the AMP site. The interval 126 to 163 (GRYTCAQCGTVYHDTDKVPVEEGVCDKCGSTHFKRRPD) is LID. Arg-127 is a binding site for ATP. Residues Cys-130 and Cys-133 each coordinate Zn(2+). An ATP-binding site is contributed by 136-137 (VY). Zn(2+) is bound by residues Cys-150 and Cys-153. Residues Arg-160 and Arg-172 each coordinate AMP. Ala-200 is a binding site for ATP.

This sequence belongs to the adenylate kinase family. As to quaternary structure, monomer.

Its subcellular location is the cytoplasm. It catalyses the reaction AMP + ATP = 2 ADP. It participates in purine metabolism; AMP biosynthesis via salvage pathway; AMP from ADP: step 1/1. Functionally, catalyzes the reversible transfer of the terminal phosphate group between ATP and AMP. Plays an important role in cellular energy homeostasis and in adenine nucleotide metabolism. This chain is Adenylate kinase, found in Rhizobium etli (strain ATCC 51251 / DSM 11541 / JCM 21823 / NBRC 15573 / CFN 42).